A 253-amino-acid polypeptide reads, in one-letter code: Acetylglutamate kinase (253 aa).

Substrate contacts are provided by residues 40-41 (GG), R62, and N154.

This sequence belongs to the acetylglutamate kinase family. ArgB subfamily.

Its subcellular location is the cytoplasm. The catalysed reaction is N-acetyl-L-glutamate + ATP = N-acetyl-L-glutamyl 5-phosphate + ADP. Its pathway is amino-acid biosynthesis; L-arginine biosynthesis; N(2)-acetyl-L-ornithine from L-glutamate: step 2/4. Functionally, catalyzes the ATP-dependent phosphorylation of N-acetyl-L-glutamate. This is Acetylglutamate kinase from Staphylococcus saprophyticus subsp. saprophyticus (strain ATCC 15305 / DSM 20229 / NCIMB 8711 / NCTC 7292 / S-41).